The chain runs to 81 residues: uncharacterized protein (81 aa).

The next 2 membrane-spanning stretches (helical) occupy residues 27 to 47 and 54 to 74; these read ASLLFFGQTILFVFLSYLNLT and IFGAYLTIFFAGFTYYSIFIM.

It localises to the cell membrane. This is an uncharacterized protein from Bacillus subtilis (strain 168).